A 427-amino-acid polypeptide reads, in one-letter code: Glucose-1-phosphate adenylyltransferase (427 aa).

Alpha-D-glucose 1-phosphate is bound by residues Tyr121, Gly186, Glu201 to Lys202, and Ser219.

Belongs to the bacterial/plant glucose-1-phosphate adenylyltransferase family. As to quaternary structure, homotetramer.

The catalysed reaction is alpha-D-glucose 1-phosphate + ATP + H(+) = ADP-alpha-D-glucose + diphosphate. It participates in glycan biosynthesis; glycogen biosynthesis. In terms of biological role, involved in the biosynthesis of ADP-glucose, a building block required for the elongation reactions to produce glycogen. Catalyzes the reaction between ATP and alpha-D-glucose 1-phosphate (G1P) to produce pyrophosphate and ADP-Glc. In Corynebacterium diphtheriae (strain ATCC 700971 / NCTC 13129 / Biotype gravis), this protein is Glucose-1-phosphate adenylyltransferase.